The primary structure comprises 317 residues: Aspartate carbamoyltransferase catalytic subunit (317 aa).

Carbamoyl phosphate-binding residues include R65 and T66. Residue K93 participates in L-aspartate binding. 3 residues coordinate carbamoyl phosphate: R115, H145, and Q148. 2 residues coordinate L-aspartate: R178 and R233. Residues G274 and P275 each coordinate carbamoyl phosphate.

It belongs to the aspartate/ornithine carbamoyltransferase superfamily. ATCase family. As to quaternary structure, heterododecamer (2C3:3R2) of six catalytic PyrB chains organized as two trimers (C3), and six regulatory PyrI chains organized as three dimers (R2).

It catalyses the reaction carbamoyl phosphate + L-aspartate = N-carbamoyl-L-aspartate + phosphate + H(+). It participates in pyrimidine metabolism; UMP biosynthesis via de novo pathway; (S)-dihydroorotate from bicarbonate: step 2/3. Functionally, catalyzes the condensation of carbamoyl phosphate and aspartate to form carbamoyl aspartate and inorganic phosphate, the committed step in the de novo pyrimidine nucleotide biosynthesis pathway. The chain is Aspartate carbamoyltransferase catalytic subunit from Bordetella parapertussis (strain 12822 / ATCC BAA-587 / NCTC 13253).